Reading from the N-terminus, the 143-residue chain is Monothiol glutaredoxin-5, mitochondrial (143 aa).

Residues 1–28 (MFGRISTRALLRPAFTHRIPSVSLSRFL) constitute a mitochondrion transit peptide. The region spanning 33 to 138 (KQAIESAIES…KLLEDADALV (106 aa)) is the Glutaredoxin domain. A glutathione-binding site is contributed by Lys-50. Cys-58 is a binding site for [2Fe-2S] cluster. Residues 90–94 (REGVK), Ile-102, and 115–116 (CD) each bind glutathione.

Belongs to the glutaredoxin family. Monothiol subfamily. As to quaternary structure, homodimer.

Its subcellular location is the mitochondrion matrix. Its function is as follows. Monothiol glutaredoxin involved in mitochondrial iron-sulfur (Fe/S) cluster transfer. Receives iron-sulfur clusters from scaffold protein ISU1 and mediates their transfer to apoproteins, to the 4Fe/FS cluster biosynthesis machinery, or export from mitochondrion. This chain is Monothiol glutaredoxin-5, mitochondrial (GRX5), found in Lachancea kluyveri (Yeast).